A 170-amino-acid polypeptide reads, in one-letter code: S-ribosylhomocysteine lyase (170 aa).

The Fe cation site is built by H54, H58, and C128.

Belongs to the LuxS family. As to quaternary structure, homodimer. Fe cation is required as a cofactor.

It carries out the reaction S-(5-deoxy-D-ribos-5-yl)-L-homocysteine = (S)-4,5-dihydroxypentane-2,3-dione + L-homocysteine. Functionally, involved in the synthesis of autoinducer 2 (AI-2) which is secreted by bacteria and is used to communicate both the cell density and the metabolic potential of the environment. The regulation of gene expression in response to changes in cell density is called quorum sensing. Catalyzes the transformation of S-ribosylhomocysteine (RHC) to homocysteine (HC) and 4,5-dihydroxy-2,3-pentadione (DPD). This chain is S-ribosylhomocysteine lyase, found in Marinomonas sp. (strain MWYL1).